Consider the following 354-residue polypeptide: Uroporphyrinogen decarboxylase (354 aa).

Substrate contacts are provided by residues 27–31, Asp-77, Tyr-154, Ser-209, and His-327; that span reads RQAGR.

The protein belongs to the uroporphyrinogen decarboxylase family. As to quaternary structure, homodimer.

It localises to the cytoplasm. It carries out the reaction uroporphyrinogen III + 4 H(+) = coproporphyrinogen III + 4 CO2. It functions in the pathway porphyrin-containing compound metabolism; protoporphyrin-IX biosynthesis; coproporphyrinogen-III from 5-aminolevulinate: step 4/4. Catalyzes the decarboxylation of four acetate groups of uroporphyrinogen-III to yield coproporphyrinogen-III. The protein is Uroporphyrinogen decarboxylase of Shewanella amazonensis (strain ATCC BAA-1098 / SB2B).